Consider the following 400-residue polypeptide: Envelope glycoprotein M (400 aa).

The Intravirion segment spans residues 1–16; sequence MRASKSDRFLMSSWVK. Residues 17–37 traverse the membrane as a helical segment; that stretch reads LLFVAVIMYICSAVVPMAATY. Residues 38-76 are Virion surface-facing; it reads EGLGFPCYFNNLVNYSALNLTVRNSAKHLTPTLFLEKPE. The helical transmembrane segment at 77-97 threads the bilayer; sequence MLVYIFWTFIVDGIAIVYYCL. The Intravirion segment spans residues 98–113; the sequence is AAVAVYRAKHVHATTM. The helical transmembrane segment at 114 to 134 threads the bilayer; sequence MSMQSWIALLGSHSVLYVAIL. At 135–152 the chain is on the virion surface side; sequence RMWSMQLFIHVLSYKHVL. The chain crosses the membrane as a helical span at residues 153 to 173; the sequence is MAAFVYCIHFCISFAHIQSLI. Topologically, residues 174–208 are intravirion; that stretch reads TCNSAQWEIPLLEQHVPDNTMMESLLTRWKPVCVN. Residues 209–229 form a helical membrane-spanning segment; sequence LYLSTTALEMLLFSLSTMMAV. The Virion surface segment spans residues 230 to 234; sequence GNSFY. The helical transmembrane segment at 235 to 255 threads the bilayer; the sequence is VLVSDAIFGAVNMFLALTVVW. Residues 256–270 lie on the Intravirion side of the membrane; the sequence is YINTEFFLVKFMRRQ. A helical membrane pass occupies residues 271-291; it reads VGFYVGVFVGYLILLLPVIRY. Residues 292-300 lie on the Virion surface side of the membrane; it reads ENAFVQANL. Residues 301–321 traverse the membrane as a helical segment; it reads HYIVAINISCIPILCILAIVI. Residues 322–400 lie on the Intravirion side of the membrane; that stretch reads RVIRSDWGLC…EIDETQMIFI (79 aa). The segment at 348–394 is disordered; the sequence is DRTPTVHQKPPPLPAKTRARAKVKDISTPAPRTQYQSDHESDSEIDE.

This sequence belongs to the herpesviridae glycoprotein M family. In terms of assembly, interacts (via N-terminus) with gN (via N-terminus). The gM-gN heterodimer forms the gCII complex. In terms of processing, N-glycosylated.

It localises to the virion membrane. It is found in the host Golgi apparatus. Its subcellular location is the host trans-Golgi network. The protein localises to the host endosome membrane. The protein resides in the host nucleus inner membrane. Functionally, envelope glycoprotein important for virion assembly and egress. Plays a role in the correct incorporation of gH-gL into virion membrane. Directs the glycoprotein N (gN) to the host trans-Golgi network. The chain is Envelope glycoprotein M from Homo sapiens (Human).